The following is a 972-amino-acid chain: Structural polyprotein (972 aa).

Position 26 (D26) interacts with a divalent metal cation. The 226-residue stretch at 509 to 734 (SGSEAGSYSK…YLGQLMRTTA (226 aa)) folds into the Peptidase S50 domain. The active-site Nucleophile is the S633. The active site involves K674. 2 disordered regions span residues 797–817 (STPP…AQEA) and 917–972 (GGRG…DGEV). Positions 801 to 817 (KHQEKPKGPDQHTAQEA) are enriched in basic and acidic residues.

In terms of assembly, homotrimer. A central divalent metal (possibly cobalt) stabilizes the VP2 trimer. Homodimer. interacts (via C-terminus) with VP1 in the cytoplasm. Interacts with VP2. In terms of processing, specific enzymatic cleavages yield mature proteins. Capsid assembly seems to be regulated by polyprotein processing. The protease VP4 cleaves itself off the polyprotein, thus releasing pre-VP2 and VP3 within the infected cell. During capsid assembly, the C-terminus of pre-VP2 is further processed by VP4, giving rise to VP2, the external capsid protein and three small peptides that all stay closely associated with the capsid.

The protein resides in the virion. It is found in the host cytoplasm. In terms of biological role, capsid protein VP2 self assembles to form an icosahedral capsid with a T=13 symmetry, about 70 nm in diameter, and consisting of 260 VP2 trimers. The capsid encapsulates the genomic dsRNA. VP2 is also involved in attachment and entry into the host cell. The precursor of VP2 plays an important role in capsid assembly. First, pre-VP2 and VP2 oligomers assemble to form a procapsid. Then, the pre-VP2 intermediates may be processed into VP2 proteins by proteolytic cleavage mediated by VP4 to obtain the mature virion. The final capsid is composed of pentamers and hexamers but VP2 has a natural tendency to assemble into all-pentameric structures. Therefore pre-VP2 may be required to allow formation of the hexameric structures. Its function is as follows. Protease VP4 is a serine protease that cleaves the polyprotein into its final products. Pre-VP2 is first partially cleaved, and may be completely processed by VP4 upon capsid maturation. Functionally, capsid protein VP3 plays a key role in virion assembly by providing a scaffold for the capsid composed of VP2. May self-assemble to form a T=4-like icosahedral inner-capsid composed of at least 180 trimers. Plays a role in genomic RNA packaging by recruiting VP1 into the capsid and interacting with the dsRNA genome segments to form a ribonucleoprotein complex. Additionally, the interaction of the VP3 C-terminal tail with VP1 removes the inherent structural blockade of the polymerase active site. Thus, VP3 can also function as a transcriptional activator. In terms of biological role, structural peptide 1 is a small peptide derived from the C-terminus of pre-VP2. It destabilizes and perforates cell membranes, suggesting a role during viral entry. Structural peptide 2 is a small peptide derived from the C-terminus of pre-VP2. It is not essential for virus viability, but viral growth is affected when this protein is absent. Its function is as follows. Structural peptide 3 is a small peptide derived from pre-VP2 C-terminus. It is not essential for virus viability, but viral growth is affected when this protein is absent. The chain is Structural polyprotein from Oncorhynchus mykiss (Rainbow trout).